The sequence spans 185 residues: Ribonuclease M5 (185 aa).

The Toprim domain occupies Lys4–Ala87. Mg(2+) contacts are provided by Glu10, Asp56, and Asp58.

Belongs to the ribonuclease M5 family. The cofactor is Mg(2+).

Its subcellular location is the cytoplasm. The enzyme catalyses Endonucleolytic cleavage of RNA, removing 21 and 42 nucleotides, respectively, from the 5'- and 3'-termini of a 5S-rRNA precursor.. Its function is as follows. Required for correct processing of both the 5' and 3' ends of 5S rRNA precursor. Cleaves both sides of a double-stranded region yielding mature 5S rRNA in one step. This chain is Ribonuclease M5, found in Bacillus anthracis.